The sequence spans 695 residues: Potassium voltage-gated channel subfamily KQT member 4 (695 aa).

The interval Met1–Ala21 is disordered. The Cytoplasmic segment spans residues Met1 to Gly96. A 1,2-diacyl-sn-glycero-3-phospho-(1D-myo-inositol-4,5-bisphosphate) is bound at residue Arg93. A helical transmembrane segment spans residues Trp97 to Leu118. The Extracellular segment spans residues Ser119 to Asn129. Residues Glu130–Trp152 traverse the membrane as a helical segment. The Cytoplasmic portion of the chain corresponds to Ser153–Arg168. The helical transmembrane segment at Phe169–Ala191 threads the bilayer. Lys172 lines the a 1,2-diacyl-sn-glycero-3-phospho-(1D-myo-inositol-4,5-bisphosphate) pocket. The Extracellular segment spans residues Gly192–Ala202. A helical; Voltage-sensor transmembrane segment spans residues Leu203 to Thr223. A 1,2-diacyl-sn-glycero-3-phospho-(1D-myo-inositol-4,5-bisphosphate) contacts are provided by Arg219, Arg220, Lys225, and Ser235. Topologically, residues Trp224–Ser235 are cytoplasmic. The chain crosses the membrane as a helical span at residues Lys236–Leu258. Residues Ala259 to Tyr270 lie on the Extracellular side of the membrane. Positions Ala271–His292 form an intramembrane region, pore-forming. Position 293 (Thr293) is a topological domain, extracellular. A helical membrane pass occupies residues Trp294–Phe322. Residues Ala323–Asp695 are Cytoplasmic-facing. Residues His330 and Lys333 each coordinate a 1,2-diacyl-sn-glycero-3-phospho-(1D-myo-inositol-4,5-bisphosphate). The interval Ala342 to Arg351 is interaction with CALM. 2 disordered regions span residues Arg400 to Gln480 and Arg496 to Lys515. 2 stretches are compositionally biased toward polar residues: residues Gly443–Ser452 and Thr463–Gln480. The segment at Arg535–Phe549 is interaction with CALM. Residues Lys546–Ala650 form a C-terminal assembly domain (tetramerization) region. The disordered stretch occupies residues Val587 to Asp606. Residues Pro591 to Ser605 show a composition bias toward basic and acidic residues. Positions Met615–Leu636 form a coiled coil.

This sequence belongs to the potassium channel family. KQT (TC 1.A.1.15) subfamily. Kv7.4/KCNQ4 sub-subfamily. Homotetramer. Interacts (via C-terminus) with calmodulin; forms a heterooctameric structure (with 4:4 KCNQ1:CALM stoichiometry); the interaction is calcium-independent, constitutive, participates in the proper assembly of a functional channel. The interaction with calcium-free CALM controls channel trafficking whereas interaction with calcium-bound CALM regulates channel gating. May form a functional heteromultimeric channel with KCNQ3. Interacts with HSP90AB1; promotes cell surface expression of KCNQ4. As to expression, expressed in the outer, but not the inner, sensory hair cells of the cochlea. Slightly expressed in heart, brain and skeletal muscle.

The protein resides in the basal cell membrane. It catalyses the reaction K(+)(in) = K(+)(out). Its activity is regulated as follows. Two molecules of phosphatidylinositol-4,5-bisphosphate (PIP2-I and PIP2-II) are essential to activate KCNQ4 channel by inducing the coupling of the voltage-sensing domain (VSD) and the pore-forming domain (PD). Upon channel activation, PIP2-I and PIP2-II disrupt the VSD-calmodulin/CALM interaction, causing the release of CALM from the VSD which triggers the opening of the gate. Calcium suppresses KCNQ4 channel current through calcium-bound CALM C-terminus. Therefore CALM acts as calcium sensor that controls channel activity. ML213 potentiates KCNQ4 channel. KCNQ4 channel is blocked by linopirdin, XE991 and bepridil, whereas clofilium is without significant effect. Muscarinic agonist oxotremorine-M strongly suppress KCNQ4 current in CHO cells in which cloned KCNQ4 channels were coexpressed with M1 muscarinic receptors. Functionally, pore-forming subunit of the voltage-gated potassium (Kv) channel involved in the regulation of sensory cells excitability in the cochlea. KCNQ4/Kv7.4 channel is composed of 4 pore-forming subunits assembled as tetramers. Promotes the outflow of potassium ions in the repolarization phase of action potential which plays a role in regulating membrane potential of excitable cells. The channel conducts a slowly activating and deactivating current. Current often shows some inward rectification at positive potentials. Channel may be selectively permeable in vitro to other cations besides potassium, in decreasing order of affinity K(+) = Rb(+) &gt; Cs(+) &gt; Na(+). Important for normal physiological function of inner ear such as sensory perception of sound. The protein is Potassium voltage-gated channel subfamily KQT member 4 of Homo sapiens (Human).